Here is a 681-residue protein sequence, read N- to C-terminus: Angiomotin-like 2b (681 aa).

A compositionally biased stretch (low complexity) spans 68–84; that stretch reads GGGAASSSQSSSESLSQ. The segment at 68 to 106 is disordered; that stretch reads GGGAASSSQSSSESLSQDEPHSPQLSTRQEPQGQEHQVD. Residues 90-102 show a composition bias toward polar residues; that stretch reads PQLSTRQEPQGQE. Y126 carries the post-translational modification Phosphotyrosine; by FGFR1. Coiled coils occupy residues 268–319, 362–441, and 481–508; these read NACS…LMKG, IEKL…LQAT, and VYTLQENLREKEERILSLEADKIRWEQK. Residues 589 to 618 form a disordered region; it reads QLGALQPATADSSIISSHSTPAHTAQGKER. The span at 597–611 shows a compositional bias: polar residues; that stretch reads TADSSIISSHSTPAH. Positions 678–681 match the PDZ-binding motif; it reads EIFI.

The protein belongs to the angiomotin family. As to quaternary structure, interacts with SRC. Post-translationally, phosphorylation at Tyr-126 is necessary for efficient binding to SRC and synergistically functioning with SRC to activate the downstream MAPK pathway. As to expression, expressed in endothelial cells.

The protein resides in the recycling endosome. It localises to the cytoplasm. It is found in the cell projection. The protein localises to the podosome. Its subcellular location is the cell junction. Functionally, required for proper architecture of actin filaments and for cell movements during embryogenesis. Plays a role in the radial actin fiber architecture in skin epithelial cells, thereby maintains cell geometry, size and cell interconnectivity within the skin. Plays an important role in coupling actin fibers to cell junctions in endothelial cells and is therefore required for correct endothelial cell morphology and maintenance of dorsal aorta lumen expansion during embryogenesis. May further play a role in the polarity, proliferation and migration of endothelial cells, and therefore participates in angiogenesis. May regulate the translocation of phosphorylated SRC to peripheral cell-matrix adhesion sites. The sequence is that of Angiomotin-like 2b from Danio rerio (Zebrafish).